Here is a 103-residue protein sequence, read N- to C-terminus: Nucleoid-associated protein Adeh_3636 (103 aa).

This sequence belongs to the YbaB/EbfC family. As to quaternary structure, homodimer.

The protein resides in the cytoplasm. Its subcellular location is the nucleoid. Its function is as follows. Binds to DNA and alters its conformation. May be involved in regulation of gene expression, nucleoid organization and DNA protection. This Anaeromyxobacter dehalogenans (strain 2CP-C) protein is Nucleoid-associated protein Adeh_3636.